The following is a 293-amino-acid chain: 4-hydroxy-tetrahydrodipicolinate synthase (293 aa).

Thr-46 is a binding site for pyruvate. Catalysis depends on Tyr-133, which acts as the Proton donor/acceptor. The Schiff-base intermediate with substrate role is filled by Lys-161. Val-202 provides a ligand contact to pyruvate.

Belongs to the DapA family. Homotetramer; dimer of dimers.

The protein resides in the cytoplasm. The catalysed reaction is L-aspartate 4-semialdehyde + pyruvate = (2S,4S)-4-hydroxy-2,3,4,5-tetrahydrodipicolinate + H2O + H(+). The protein operates within amino-acid biosynthesis; L-lysine biosynthesis via DAP pathway; (S)-tetrahydrodipicolinate from L-aspartate: step 3/4. Functionally, catalyzes the condensation of (S)-aspartate-beta-semialdehyde [(S)-ASA] and pyruvate to 4-hydroxy-tetrahydrodipicolinate (HTPA). This chain is 4-hydroxy-tetrahydrodipicolinate synthase, found in Wolbachia pipientis wMel.